Reading from the N-terminus, the 1782-residue chain is Vitellogenin receptor (1782 aa).

An N-terminal signal peptide occupies residues 1-18 (MRFIVLLFICSFIYPCYV). At 19-1663 (SSIGFRRISK…SINFSRNTRN (1645 aa)) the chain is on the extracellular side. 3 LDL-receptor class A domains span residues 35–72 (KCEDGYFQCNSGECIPVDKKCDYIDHCIDGSDEDFECD), 81–118 (TCAKDQFKCKNQECIPAAKYCDMVNDCLDESDEHDGCV), and 122–157 (NCTNKFLCTDGHCINKEWVCDGRNDCPDGNDEWNCK). Intrachain disulfides connect C36/C48, C43/C61, C55/C71, C82/C94, C89/C107, and C101/C117. A glycan (N-linked (GlcNAc...) asparagine) is linked at N122. Intrachain disulfides connect C123–C134, C129–C147, and C141–C156. N-linked (GlcNAc...) asparagine glycosylation is present at N159. Positions 166–205 (SCKTENYQYMCANHRCISLKVVCDKKDDCGDGSDEGPGCT) constitute an LDL-receptor class A 4 domain. Cystine bridges form between C167–C181, C176–C194, and C188–C204. 2 N-linked (GlcNAc...) asparagine glycosylation sites follow: N208 and N239. The EGF-like 1 domain occupies 208-243 (NCSSAGCQSNCHQTPKGSVCTCKPGYKLQKDNRTCN). The EGF-like; calcium-binding domain occupies 244 to 283 (DIDECQAYGICDQDCMNVPGSYACTCQREYYLENDKRTCK). 3 disulfide bridges follow: C248–C258, C254–C267, and C269–C282. LDL-receptor class B repeat units follow at residues 327–374 (DYVY…DWIT), 375–416 (KNIY…LPTQ), 417–460 (GKMY…DYPN), 461–501 (ERLY…TVFQ), and 502–544 (NKLY…DHSA). In terms of domain architecture, EGF-like 2 spans 552-588 (PCYSNPCSQLCMLNQNKGYTCGCTLDKKLNADKHTCQ). N-linked (GlcNAc...) asparagine glycans are attached at residues N702, N859, N896, and N923. An EGF-like 3 domain is found at 889 to 927 (DCQKNNGNCSHVCLPSLITSFICACPPGMELSNDNRTCI). 5 LDL-receptor class A domains span residues 931–969 (ECSKNEYKCSEHNICIQRNQLCDGIENCPNGEDETSECR), 973–1009 (RCKENQFMCKNGDCIRLKDRCNSRYDCTDQSDEQNCE), 1012–1049 (KCKSDEFQCKFTETCIPKTKMCDSNPDCDDLSDEEDCR), 1052–1090 (ECTSNEFKCNNGKCIPNTFVCDNDNDCEDGEDEAAEKCY), and 1094–1131 (ACKMPKMFKCPNGDCISDSLLCNGINDCNDGSDEVHCL). 15 disulfides stabilise this stretch: C932/C945, C939/C958, C952/C968, C974/C986, C981/C999, C993/C1008, C1013/C1026, C1020/C1039, C1033/C1048, C1053/C1065, C1060/C1078, C1072/C1089, C1095/C1108, C1103/C1121, and C1115/C1130. 2 N-linked (GlcNAc...) asparagine glycosylation sites follow: N1133 and N1140. LDL-receptor class A domains follow at residues 1140–1177 (NCSLNEYRCLGTDICLPKNVRCDGKNDCPQSDDEQNCT), 1178–1214 (YCFENEFACDNKRCIPELWVCDKANDCGDNSDEKNCD), and 1225–1260 (ECDEFKCSVGTCLPYSKVCDGNRDCPDGSDETGKCQ). 9 disulfide bridges follow: C1141/C1154, C1148/C1167, C1161/C1176, C1179/C1191, C1186/C1204, C1198/C1213, C1226/C1236, C1231/C1249, and C1243/C1259. An N-linked (GlcNAc...) asparagine glycan is attached at N1175. Residues 1262 to 1298 (ACTVNNFCKGMCYKTPAGAVCGCQSGYRLAVDMISCE) form the EGF-like 4 domain. LDL-receptor class B repeat units lie at residues 1385 to 1425 (DSVY…DWIT), 1471 to 1518 (RWLF…DHVK), and 1519 to 1561 (SKLY…FEQS). N1626, N1640, and N1656 each carry an N-linked (GlcNAc...) asparagine glycan. The chain crosses the membrane as a helical span at residues 1664–1684 (ISGIYSITIIVLLVSVLLLCV). The Cytoplasmic segment spans residues 1685–1782 (YYYYQKNKLK…ALIYFVHNSK (98 aa)).

In terms of tissue distribution, expressed in ovaries of reproductive females.

The protein resides in the membrane. In terms of biological role, involved in uptake of vitellogenin by endocytosis. Expression is regulated by the juvenile hormone analog, methoprene (in vitro). The polypeptide is Vitellogenin receptor (Solenopsis invicta (Red imported fire ant)).